A 458-amino-acid polypeptide reads, in one-letter code: Argininosuccinate lyase (458 aa).

This sequence belongs to the lyase 1 family. Argininosuccinate lyase subfamily.

The protein resides in the cytoplasm. The catalysed reaction is 2-(N(omega)-L-arginino)succinate = fumarate + L-arginine. It functions in the pathway amino-acid biosynthesis; L-arginine biosynthesis; L-arginine from L-ornithine and carbamoyl phosphate: step 3/3. This Haemophilus ducreyi (strain 35000HP / ATCC 700724) protein is Argininosuccinate lyase.